The following is a 505-amino-acid chain: Chemotaxis regulatory protein ChePep (505 aa).

2 disordered regions span residues 154-403 (EPNN…EDIP) and 420-465 (EAVA…SSPL). Basic and acidic residues-rich tracts occupy residues 172–263 (EEVK…EKTQ), 289–311 (ENKEKTQESAEIPQDKEIQEVVT), 337–346 (QAHELEKQEI), 359–373 (QDKEVQELEIPKEET), and 386–398 (PQEKETQEDHYES). Residues 440 to 451 (TETSKNENNTET) are compositionally biased toward low complexity.

In terms of assembly, interacts with CheZ; the interaction is essential for each other polar localization.

Its subcellular location is the cytoplasm. Plays an essential role in chemotaxis. Regulates flagellar rotation through the formation of a complex with chemotaxis protein CheZ. Plays a major role in colonization of the stomach. This is Chemotaxis regulatory protein ChePep from Helicobacter pylori (strain ATCC 700392 / 26695) (Campylobacter pylori).